The primary structure comprises 238 residues: Cysteine-rich venom protein pseudecin (238 aa).

The first 19 residues, 1 to 19, serve as a signal peptide directing secretion; sequence MIAFIVLLSLAAVLQQSSG. Residues 20-28 constitute a propeptide that is removed on maturation; it reads TVDFASESS. In terms of domain architecture, SCP spans 38-164; that stretch reads VDKHNALRRS…SSKYLYVCQY (127 aa). Positions 51 and 106 each coordinate Zn(2+). 8 disulfides stabilise this stretch: Cys-75/Cys-153, Cys-92/Cys-165, Cys-148/Cys-162, Cys-184/Cys-191, Cys-187/Cys-196, Cys-200/Cys-233, Cys-209/Cys-227, and Cys-218/Cys-231. The ShKT domain maps to 200 to 233; the sequence is CNYNNDFSNCKSLAKKSKCQTEWIKKKCPASCFC.

In terms of tissue distribution, expressed by the venom gland.

It is found in the secreted. Blocks olfactory (CNGA2) and retinal (CNGA1) CNG channel currents. Is really less potent that Pseudechetoxin. Does not affect neither depolarization- nor caffeine-induced contraction of smooth muscle. The protein is Cysteine-rich venom protein pseudecin of Pseudechis porphyriacus (Red-bellied black snake).